The primary structure comprises 301 residues: Protoheme IX farnesyltransferase (301 aa).

The next 9 membrane-spanning stretches (helical) occupy residues Val-29–Val-49, Leu-51–Phe-71, Ala-101–Asn-121, Leu-123–Leu-143, Asn-150–Thr-170, Ala-177–Ile-197, Cys-223–Met-243, Ser-244–Trp-264, and Phe-281–Gly-301.

This sequence belongs to the UbiA prenyltransferase family. Protoheme IX farnesyltransferase subfamily.

Its subcellular location is the cell inner membrane. It catalyses the reaction heme b + (2E,6E)-farnesyl diphosphate + H2O = Fe(II)-heme o + diphosphate. Its pathway is porphyrin-containing compound metabolism; heme O biosynthesis; heme O from protoheme: step 1/1. In terms of biological role, converts heme B (protoheme IX) to heme O by substitution of the vinyl group on carbon 2 of heme B porphyrin ring with a hydroxyethyl farnesyl side group. This is Protoheme IX farnesyltransferase from Shewanella denitrificans (strain OS217 / ATCC BAA-1090 / DSM 15013).